The sequence spans 143 residues: FAD synthase (143 aa).

ATP contacts are provided by residues 10–11, 15–18, and Asp-93; these read TF and HPGH.

It belongs to the archaeal FAD synthase family. As to quaternary structure, homodimer. A divalent metal cation is required as a cofactor.

The enzyme catalyses FMN + ATP + H(+) = FAD + diphosphate. It participates in cofactor biosynthesis; FAD biosynthesis; FAD from FMN: step 1/1. Catalyzes the transfer of the AMP portion of ATP to flavin mononucleotide (FMN) to produce flavin adenine dinucleotide (FAD) coenzyme. The chain is FAD synthase from Haloterrigena turkmenica (strain ATCC 51198 / DSM 5511 / JCM 9101 / NCIMB 13204 / VKM B-1734 / 4k) (Halococcus turkmenicus).